The sequence spans 2000 residues: Myosin-14 (2000 aa).

Ala-2 carries the post-translational modification N-acetylalanine. The residue at position 33 (Thr-33) is a Phosphothreonine. One can recognise a Myosin N-terminal SH3-like domain in the interval 47–97; sequence TARRMVWVPSELHGFEAAALRDEGEEEAEVELAESGRRLRLPRDQIQRMNP. A Phosphoserine modification is found at Ser-56. In terms of domain architecture, Myosin motor spans 101–804; it reads SKAEDMAELT…VLAQLEEERD (704 aa). 194-201 lines the ATP pocket; the sequence is GESGAGKT. The actin-binding stretch occupies residues 682-704; sequence LSRLMATLSNTNPSFVRCIVPNH. Residues 807 to 836 enclose the IQ domain; sequence VTDIIVSFQAAARGYLARRAFQRRQQQQSA. The stretch at 866–1951 forms a coiled coil; it reads LQVTRQDEVL…VTTLRNRLRR (1086 aa). Position 925 is a phosphoserine (Ser-925). A disordered region spans residues 1173-1197; it reads RGELEDTLDSTNAQQELRSKREQEV. Phosphothreonine is present on Thr-1198. A phosphoserine mark is found at Ser-1249 and Ser-1280. Disordered stretches follow at residues 1260–1311, 1597–1629, 1720–1751, 1910–1942, and 1967–2000; these read ELSS…AELE, HERDLQGRDDAGEERRRQLAKQLRDAEVERDEE, SDRARRQAQQDRDEMAEEVASGNLSKAATLEE, AEEEASRAQAGRRRLQRELEDVTESAESMNREV, and LEEGVASDEEEAEGAEPGSAPGQEPEAPPPATPQ. Positions 1290-1304 are enriched in basic and acidic residues; sequence SDSERARSEAAEKLQ. Residues 1720 to 1732 are compositionally biased toward basic and acidic residues; sequence SDRARRQAQQDRD. Acidic residues predominate over residues 1971 to 1980; sequence VASDEEEAEG. Residues Ser-1973 and Ser-1985 each carry the phosphoserine modification. The segment covering 1981–1991 has biased composition (low complexity); it reads AEPGSAPGQEP. Thr-1998 carries the phosphothreonine modification.

It belongs to the TRAFAC class myosin-kinesin ATPase superfamily. Myosin family. As to quaternary structure, myosin is a hexameric protein that consists of 2 heavy chain subunits (MHC), 2 alkali light chain subunits (MLC) and 2 regulatory light chain subunits (MLC-2). Highest levels in lung, kidney, brain and colon, very low levels in liver and bladder and no expression in spleen or seminal vesicle (at protein level). Isoform 1 is expressed in liver, kidney and testis with low levels in skeletal muscle and heart. Isoform 1 and isoform 2 are expressed in brain and lung. Isoform 2 is the main isoform expressed in skeletal muscle and heart. Isoform 3 is limited to brain stem, cerebellum and spinal cord.

Functionally, cellular myosin that appears to play a role in cytokinesis, cell shape, and specialized functions such as secretion and capping. This Mus musculus (Mouse) protein is Myosin-14 (Myh14).